We begin with the raw amino-acid sequence, 185 residues long: Putative manganese efflux pump MntP (185 aa).

Helical transmembrane passes span 6-26 (IFII…ACGL), 41-61 (FHFG…GLTV), 65-85 (VETY…GKMI), 107-127 (LVFL…SFSI), 132-152 (IAFP…FGLW), and 164-184 (SHIA…KLLL).

It belongs to the MntP (TC 9.B.29) family.

The protein resides in the cell inner membrane. Probably functions as a manganese efflux pump. The chain is Putative manganese efflux pump MntP from Maridesulfovibrio salexigens (strain ATCC 14822 / DSM 2638 / NCIMB 8403 / VKM B-1763) (Desulfovibrio salexigens).